The sequence spans 200 residues: Probable molybdenum cofactor guanylyltransferase (200 aa).

GTP is bound by residues 9-11 (LAG), Lys21, Asp69, and Asp100. Asp100 contributes to the Mg(2+) binding site.

Belongs to the MobA family. Mg(2+) is required as a cofactor.

It is found in the cytoplasm. It carries out the reaction Mo-molybdopterin + GTP + H(+) = Mo-molybdopterin guanine dinucleotide + diphosphate. Functionally, transfers a GMP moiety from GTP to Mo-molybdopterin (Mo-MPT) cofactor (Moco or molybdenum cofactor) to form Mo-molybdopterin guanine dinucleotide (Mo-MGD) cofactor. This Bacillus cereus (strain AH187) protein is Probable molybdenum cofactor guanylyltransferase.